Here is a 415-residue protein sequence, read N- to C-terminus: Protein PIN-LIKES 4 (415 aa).

Over 1–13 (MKLLELFIASSKP) the chain is Lumenal. The helical transmembrane segment at 14–34 (VVETLLITSVGFYLALDTVNL) threads the bilayer. The Cytoplasmic segment spans residues 35 to 44 (LGHDARKHLN). A helical transmembrane segment spans residues 45-61 (NIVFYVFSPSLIGSRLA). At 62–75 (DSVTYESLVKMWFM) the chain is on the lumenal side. A helical membrane pass occupies residues 76 to 96 (PVNVLLTFMIGSLLGWIVIVI). Over 97 to 106 (TKPPSQLRGL) the chain is Cytoplasmic. The helical transmembrane segment at 107-127 (IISCCASGNLGTMPLIIIPAI) threads the bilayer. Residues 128–143 (CKEKGGPFGDSESCEK) are Lumenal-facing. Residues 144 to 161 (YGMGYVTLSMTAFFISVY) traverse the membrane as a helical segment. Over 162–244 (KHDTNWYVSG…RVVSLSKKVN (83 aa)) the chain is Cytoplasmic. Residues 245–265 (LGSIFAPATIAAIIALVIGLI) form a helical membrane-spanning segment. The Lumenal segment spans residues 266-285 (TPLRNLIIGTVAPFRVIQDS). Residues 286 to 306 (LTLLGDGAIPAMTLILGGNLL) form a helical membrane-spanning segment. Residues 307–322 (KGMRRSEVRSSEMKNS) are Cytoplasmic-facing. The chain crosses the membrane as a helical span at residues 323 to 343 (CIIGVLVARYILLPVSGVLLV). Topologically, residues 344–355 (RGAYKLDLVTSE) are lumenal. Residues 356 to 376 (PLYQFVLLLQYAVPPAMNLGT) traverse the membrane as a helical segment. Topologically, residues 377-389 (KTQLFGAGESECS) are cytoplasmic. A helical transmembrane segment spans residues 390–410 (VIMLWTYSLAAVSLTVWPTFF). The Lumenal portion of the chain corresponds to 411–415 (MWLVT).

It belongs to the auxin efflux carrier (TC 2.A.69.2) family. As to expression, expressed in seedlings, rosette and cauline leaves, stems, flowers and siliques.

It localises to the endoplasmic reticulum membrane. Involved in cellular auxin homeostasis by regulating auxin metabolism. Regulates intracellular auxin accumulation at the endoplasmic reticulum and thus auxin availability for nuclear auxin signaling. This is Protein PIN-LIKES 4 from Arabidopsis thaliana (Mouse-ear cress).